A 2898-amino-acid polypeptide reads, in one-letter code: Papilin (2898 aa).

A signal peptide spans 1–26; it reads MDLSRRLCSTALVAFIVLASIHDSQS. Residues 43–67 are disordered; that stretch reads LPESSVTPGGEGNDPDEWTPWSSPS. The region spanning 57–111 is the TSP type-1 1 domain; the sequence is PDEWTPWSSPSDCSRTCGGGVSYQTRECLRRDDRGEAVCSGGSRRYFSCNTQDCP. 3 cysteine pairs are disulfide-bonded: Cys69/Cys105, Cys73/Cys110, and Cys84/Cys95. Residues Asn258 and Asn319 are each glycosylated (N-linked (GlcNAc...) asparagine). Residues 338-397 form the TSP type-1 2 domain; it reads DTHTWTHHQFNACSASCGGGSQSRKVTCNNRITLAEVNPSLCDQKSKPVEEQACGTEPCA. Asn419 carries an N-linked (GlcNAc...) asparagine glycan. TSP type-1 domains follow at residues 461–521, 522–575, 576–633, and 639–694; these read NCPK…TPCE, GVDW…KSPK, CEAQ…QDCE, and CPGE…EACT. 3 cysteine pairs are disulfide-bonded: Cys462/Cys504, Cys473/Cys515, and Cys477/Cys520. The N-linked (GlcNAc...) asparagine glycan is linked to Asn669. Disordered regions lie at residues 699–1252 and 1323–1367; these read LPLT…CAKS and GEND…PDTK. 2 stretches are compositionally biased toward acidic residues: residues 708–720 and 727–738; these read IEDD…EDGI and LSDDEKSEDVID. The span at 768–788 shows a compositional bias: polar residues; that stretch reads STGTTFEGSGYDSESTTDSGI. Over residues 801-879 the composition is skewed to low complexity; it reads EASTDLSSST…ASASESTDVS (79 aa). 5 N-linked (GlcNAc...) asparagine glycosylation sites follow: Asn889, Asn914, Asn917, Asn950, and Asn1064. The segment covering 890–1053 has biased composition (low complexity); that stretch reads ASDSTPESST…SDNTDITTDG (164 aa). The span at 1064 to 1073 shows a compositional bias: polar residues; that stretch reads NASTEGSTEG. Low complexity-rich tracts occupy residues 1076 to 1091 and 1104 to 1215; these read EDTT…TEST and STVE…IWST. Over residues 1237–1248 the composition is skewed to basic residues; that stretch reads SKPRKCKPKKST. Over residues 1330-1351 the composition is skewed to low complexity; the sequence is PETTTVPPTTTTEETQPETTTE. N-linked (GlcNAc...) asparagine glycosylation is found at Asn1489 and Asn1623. 15 cysteine pairs are disulfide-bonded: Cys1612-Cys1662, Cys1621-Cys1645, Cys1637-Cys1658, Cys1671-Cys1721, Cys1680-Cys1704, Cys1696-Cys1717, Cys1730-Cys1780, Cys1739-Cys1763, Cys1755-Cys1776, Cys1790-Cys1840, Cys1799-Cys1823, Cys1815-Cys1836, Cys1849-Cys1899, Cys1858-Cys1882, and Cys1874-Cys1895. 5 BPTI/Kunitz inhibitor domains span residues 1612–1662, 1671–1721, 1730–1780, 1790–1840, and 1849–1899; these read CGLP…KDTC, CLLP…QGTC, CEQP…NYNC, CALP…EDHC, and CEIP…LARC. Asn1750 carries an N-linked (GlcNAc...) asparagine glycan. Positions 1902-1928 are disordered; sequence KPEPTTTTPATRPQPSRQDVCDEEPAP. Positions 1905–1916 are enriched in low complexity; sequence PTTTTPATRPQP. 3 disulfide bridges follow: Cys1922–Cys1972, Cys1931–Cys1955, and Cys1947–Cys1968. Residues 1922-1972 form the BPTI/Kunitz inhibitor 6 domain; the sequence is CDEEPAPGECSTWVLKWHFDRKIGACRQFYYGNCGGNGNRFETENDCQQRC. The interval 1972–2004 is disordered; sequence CLSQEPPAPTPPRAPAPTRQPDPAPTVAQCSQP. Residues 1977 to 1995 are compositionally biased toward pro residues; sequence PPAPTPPRAPAPTRQPDPA. Intrachain disulfides connect Cys2001-Cys2051, Cys2010-Cys2034, Cys2026-Cys2047, Cys2071-Cys2121, Cys2080-Cys2104, Cys2096-Cys2117, Cys2128-Cys2178, Cys2137-Cys2161, Cys2153-Cys2174, Cys2194-Cys2244, Cys2203-Cys2227, Cys2219-Cys2240, Cys2253-Cys2303, Cys2262-Cys2286, Cys2278-Cys2299, Cys2318-Cys2371, Cys2327-Cys2354, and Cys2346-Cys2367. BPTI/Kunitz inhibitor domains follow at residues 2001–2051, 2071–2121, 2128–2178, 2194–2244, 2253–2303, and 2318–2371; these read CSQP…SARC, CFLA…QNEC, CALP…LNFC, CAEP…ERQC, CNEP…QTVC, and CLLP…TNQC. A glycan (N-linked (GlcNAc...) asparagine) is linked at Asn2020. Asn2083 carries an N-linked (GlcNAc...) asparagine glycan. Asn2205 carries N-linked (GlcNAc...) asparagine glycosylation. Positions 2452–2498 constitute a WAP domain; it reads DIYKPGECPALSANASGCARECYTDADCRGDNKCCSDGCGQLCVHPA. Asn2465, Asn2552, and Asn2625 each carry an N-linked (GlcNAc...) asparagine glycan. Ig-like C2-type domains lie at 2523–2607, 2617–2697, and 2749–2840; these read PKEA…REVA, PAYI…RPVS, and PTVN…ANVS. Residues Cys2543 and Cys2592 are joined by a disulfide bond. Cystine bridges form between Cys2640/Cys2687 and Cys2775/Cys2824. Residues Asn2784 and Asn2838 are each glycosylated (N-linked (GlcNAc...) asparagine). The region spanning 2847–2886 is the PLAC domain; the sequence is VSPECVDNPYFANCKLIVKGRYCSNPYYTQFCCRSCTLAG.

It belongs to the papilin family. Homooligomer; disulfide-linked. Post-translationally, N-glycosylated. In terms of processing, sulfated. As to expression, during embryogenesis it first appears in the extracellular matrix during gastrulation and early mesoderm development at sites where basement membranes do not subsequently form. Later, migrating hemocytes prominently produce it together with other ECM components, in basement membranes that underlie epithelia and envelop muscles and emerging organs. At various life stages, it can be synthesized by other cells, such as those of the fat body, and it also occurs in a few, circumscribed regions of relatively amorphous ECM. Isoform E is specifically expressed in ECM of heart and proventriculus. Isoform C is a major component of transitory ECM deposit in the early embryo. Isoform F is a major component of the basement membrane during embryogenesis.

The protein resides in the secreted. The protein localises to the extracellular space. It localises to the extracellular matrix. Its subcellular location is the basement membrane. Essential extracellular matrix (ECM) protein that influences cell rearrangements. May act by modulating metalloproteinases action during organogenesis. Able to non-competitively inhibit procollagen N-proteinase, an ADAMTS metalloproteinase. This chain is Papilin (Ppn), found in Drosophila melanogaster (Fruit fly).